Consider the following 434-residue polypeptide: Histidinol dehydrogenase (434 aa).

Residues tyrosine 130, glutamine 188, and asparagine 211 each contribute to the NAD(+) site. The substrate site is built by serine 237, glutamine 259, and histidine 262. Glutamine 259 and histidine 262 together coordinate Zn(2+). Catalysis depends on proton acceptor residues glutamate 326 and histidine 327. Substrate-binding residues include histidine 327, aspartate 360, glutamate 414, and histidine 419. A Zn(2+)-binding site is contributed by aspartate 360. Position 419 (histidine 419) interacts with Zn(2+).

This sequence belongs to the histidinol dehydrogenase family. As to quaternary structure, homodimer. The cofactor is Zn(2+).

It carries out the reaction L-histidinol + 2 NAD(+) + H2O = L-histidine + 2 NADH + 3 H(+). It functions in the pathway amino-acid biosynthesis; L-histidine biosynthesis; L-histidine from 5-phospho-alpha-D-ribose 1-diphosphate: step 9/9. Functionally, catalyzes the sequential NAD-dependent oxidations of L-histidinol to L-histidinaldehyde and then to L-histidine. In Escherichia coli O157:H7, this protein is Histidinol dehydrogenase.